The sequence spans 378 residues: F-box/kelch-repeat protein At4g29370 (378 aa).

Positions 23–69 (TSLFLQLPDEILVNCLARLSKSSYRSLSLVCKTFRSLLHSQPLYSAR) constitute an F-box domain. Kelch repeat units follow at residues 124-172 (GSKI…VLDD), 173-218 (KIYV…VRKI), 220-259 (VVGG…WSNS), and 260-305 (WCVI…NDNR).

The protein is F-box/kelch-repeat protein At4g29370 of Arabidopsis thaliana (Mouse-ear cress).